The sequence spans 319 residues: MVLRNLTAMAIYDQTFVYSSDDALAGMVVSMECLTGLFLLVAVIIGCFRIAALKSPFGILMINQNCAQLMACINSGSFSTLGVLLNIKPVLSISYLFGNFSIFLLPVILISFLLMSFNRFCACFFPLRYQNLFSSSMIRTFIVFNWLLSLVAGSYLVVVRECNFVFYHFGWLFAGSVSVKCGTLLSLYSISIQTVLSITIVGLDVVTLVALMAFRSKVYQSHSVEVRRRELSFSGQVIIQGAVFLCHGAWYDMGHAILPGNDDRWKFFFTTSFSSNLLHVFDPVVVFAFNKEFRRWLFRNFNVPTAQKRIVTVVSAHNT.

The next 7 helical transmembrane spans lie at 28–48 (VVSM…IGCF), 67–87 (AQLM…LLNI), 95–115 (YLFG…FLLM), 138–158 (IRTF…YLVV), 164–184 (FVFY…CGTL), 194–214 (TVLS…LMAF), and 267–287 (FFFT…VVVF).

It belongs to the G-protein coupled receptor 1 family. In terms of tissue distribution, expressed in ASI sensory neurons.

It localises to the cell membrane. Its subcellular location is the perikaryon. It is found in the cell projection. The protein localises to the cilium. In terms of biological role, receptor for the ascaroside pheromone icas#9 which suppresses exploratory forgaging behavior. In response to ascaroside icas#9, may furthermore play a role in the expression of genes in the TGF-beta signaling pathway, such as daf-7, and in insulin signaling pathway, such as daf-28, which may in turn contribute to exploratory behavior. This chain is Serpentine receptor class X-43, found in Caenorhabditis elegans.